The sequence spans 42 residues: Photosystem I reaction center subunit IX (42 aa).

The helical transmembrane segment at 7–27 (YLSVAPVLSTLWFGSLAGLLI) threads the bilayer.

The protein belongs to the PsaJ family.

Its subcellular location is the plastid. It localises to the chloroplast thylakoid membrane. In terms of biological role, may help in the organization of the PsaE and PsaF subunits. In Lepidium virginicum (Virginia pepperweed), this protein is Photosystem I reaction center subunit IX.